A 337-amino-acid chain; its full sequence is uncharacterized protein (337 aa).

ATP is bound at residue 29 to 36 (GPKSSGKS).

This sequence belongs to the archaeal ATPase family.

This is an uncharacterized protein from Methanocaldococcus jannaschii (strain ATCC 43067 / DSM 2661 / JAL-1 / JCM 10045 / NBRC 100440) (Methanococcus jannaschii).